The primary structure comprises 237 residues: Ribonuclease PH (237 aa).

Phosphate is bound by residues Arg86 and 124–126 (GTR).

This sequence belongs to the RNase PH family. Homohexameric ring arranged as a trimer of dimers.

The enzyme catalyses tRNA(n+1) + phosphate = tRNA(n) + a ribonucleoside 5'-diphosphate. Functionally, phosphorolytic 3'-5' exoribonuclease that plays an important role in tRNA 3'-end maturation. Removes nucleotide residues following the 3'-CCA terminus of tRNAs; can also add nucleotides to the ends of RNA molecules by using nucleoside diphosphates as substrates, but this may not be physiologically important. Probably plays a role in initiation of 16S rRNA degradation (leading to ribosome degradation) during starvation. The polypeptide is Ribonuclease PH (Shewanella pealeana (strain ATCC 700345 / ANG-SQ1)).